The primary structure comprises 377 residues: P2Y purinoceptor 2 (377 aa).

Residues 1–32 (MAADLGPWNDTINGTWDGDELGYRCRFNEDFK) lie on the Extracellular side of the membrane. N-linked (GlcNAc...) asparagine glycans are attached at residues Asn-9 and Asn-13. A helical transmembrane segment spans residues 33–59 (YVLLPVSYGVVCVPGLCLNAVALYIFL). The Cytoplasmic segment spans residues 60–70 (CRLKTWNASTT). A helical membrane pass occupies residues 71–93 (YMFHLAVSDALYAASLPLLVYYY). Topologically, residues 94–110 (ARGDHWPFSTVLCKLVR) are extracellular. A disulfide bond links Cys-106 and Cys-183. Residues 111–129 (FLFYTNLYCSILFLTCISV) traverse the membrane as a helical segment. Residues 130-152 (HRCLGVLRPLRSLRWGRARYARR) lie on the Cytoplasmic side of the membrane. Residues 153-172 (VAGAVWVLVLACQAPVLYFV) traverse the membrane as a helical segment. The Extracellular portion of the chain corresponds to 173-194 (TTSARGGRVTCHDTSAPELFSR). A helical membrane pass occupies residues 195-220 (FVAYSSVMLGLLFAVPFAVILVCYVL). Residues 221–246 (MARRLLKPAYGTSGGLPRAKRKSVRT) are Cytoplasmic-facing. A helical membrane pass occupies residues 247-269 (IAVVLAVFALCFLPFHVTRTLYY). Topologically, residues 270 to 287 (SFRSLDLSCHTLNAINMA) are extracellular. The helical transmembrane segment at 288–309 (YKVTRPLASANSCLDPVLYFLA) threads the bilayer. Over 310-377 (GQRLVRFARD…GSENTKDIRL (68 aa)) the chain is Cytoplasmic. The tract at residues 318 to 377 (RDAKPPTGPSPATPARRRLGLRRSDRTDMQRIEDVLGSSEDSRRTESTPAGSENTKDIRL) is disordered. Residues 339-363 (RRSDRTDMQRIEDVLGSSEDSRRTE) are compositionally biased toward basic and acidic residues.

Belongs to the G-protein coupled receptor 1 family. In terms of tissue distribution, spleen, testis, kidney, liver, lung, heart and brain.

It is found in the cell membrane. In terms of biological role, receptor for ATP and UTP coupled to G-proteins that activate a phosphatidylinositol-calcium second messenger system. The affinity range is UTP = ATP &gt; ATP-gamma-S &gt;&gt; 2-methylthio-ATP = ADP. The sequence is that of P2Y purinoceptor 2 (P2RY2) from Homo sapiens (Human).